Reading from the N-terminus, the 259-residue chain is Proteasome assembly chaperone 2 (259 aa).

It belongs to the PSMG2 family. In terms of assembly, forms a heterodimer with psmg1. Post-translationally, degraded by the proteasome upon completion of 20S proteasome maturation.

It is found in the nucleus. Chaperone protein which promotes assembly of the 20S proteasome as part of a heterodimer with psmg1. The protein is Proteasome assembly chaperone 2 of Xenopus laevis (African clawed frog).